A 245-amino-acid polypeptide reads, in one-letter code: Probable phosphatase KPN78578_10290 (245 aa).

Histidine 7, histidine 9, histidine 15, histidine 40, glutamate 73, histidine 101, histidine 131, aspartate 192, and histidine 194 together coordinate Zn(2+).

This sequence belongs to the PHP family. Homotrimer. Zn(2+) serves as cofactor.

This Klebsiella pneumoniae subsp. pneumoniae (strain ATCC 700721 / MGH 78578) protein is Probable phosphatase KPN78578_10290.